The sequence spans 391 residues: MPGNSFGKLFRVTTFGESHGPAVGVVIDGVPAGLPLTVEDIKFELEFRKPGRLYVSGRREKDEPEILSGIFNNRTTGSPIAVIVRNTDVISSFYEEIRYKPRPGHADLPFIMKYGYENWDYRGGGRASARETVGRVIAGAVAKKLLMLADTWIAGHLRSLGPEELNEEVTFEEVLCSKYSPVRASKKVLEEKYEALIKKATQEGDSYGGIAEVITKNPPIGLGEPVFDKMKAELAKAIMSIPAVTGFEYGLGFMVSKMKGSEANDEIIRKDNKIGWKYNYAGGILGGLTNGEDLIVRCAFKPTSSIRKPQKTIDLRNLEETYISVIGRHDPAVAIRGVTVVESMVALTLVDHAMRAGVIPLVKLTEEQGNIVQQRWERYVRSCKPMEESQL.

Arg-48 provides a ligand contact to NADP(+). FMN is bound by residues 126–128, Gly-286, 301–305, and Arg-328; these read RAS and KPTSS.

This sequence belongs to the chorismate synthase family. Requires FMNH2 as cofactor.

It catalyses the reaction 5-O-(1-carboxyvinyl)-3-phosphoshikimate = chorismate + phosphate. Its pathway is metabolic intermediate biosynthesis; chorismate biosynthesis; chorismate from D-erythrose 4-phosphate and phosphoenolpyruvate: step 7/7. Catalyzes the anti-1,4-elimination of the C-3 phosphate and the C-6 proR hydrogen from 5-enolpyruvylshikimate-3-phosphate (EPSP) to yield chorismate, which is the branch point compound that serves as the starting substrate for the three terminal pathways of aromatic amino acid biosynthesis. This reaction introduces a second double bond into the aromatic ring system. This Saccharolobus islandicus (strain Y.N.15.51 / Yellowstone #2) (Sulfolobus islandicus) protein is Chorismate synthase.